A 133-amino-acid chain; its full sequence is ATP synthase epsilon chain, chloroplastic (133 aa).

Belongs to the ATPase epsilon chain family. F-type ATPases have 2 components, CF(1) - the catalytic core - and CF(0) - the membrane proton channel. CF(1) has five subunits: alpha(3), beta(3), gamma(1), delta(1), epsilon(1). CF(0) has three main subunits: a, b and c.

The protein resides in the plastid. It localises to the chloroplast thylakoid membrane. Produces ATP from ADP in the presence of a proton gradient across the membrane. The polypeptide is ATP synthase epsilon chain, chloroplastic (Solanum lycopersicum (Tomato)).